A 174-amino-acid chain; its full sequence is Crossover junction endodeoxyribonuclease RuvC (174 aa).

Active-site residues include Asp8, Glu67, and Asp139. Mg(2+) contacts are provided by Asp8, Glu67, and Asp139.

This sequence belongs to the RuvC family. As to quaternary structure, homodimer which binds Holliday junction (HJ) DNA. The HJ becomes 2-fold symmetrical on binding to RuvC with unstacked arms; it has a different conformation from HJ DNA in complex with RuvA. In the full resolvosome a probable DNA-RuvA(4)-RuvB(12)-RuvC(2) complex forms which resolves the HJ. The cofactor is Mg(2+).

It localises to the cytoplasm. It carries out the reaction Endonucleolytic cleavage at a junction such as a reciprocal single-stranded crossover between two homologous DNA duplexes (Holliday junction).. Its function is as follows. The RuvA-RuvB-RuvC complex processes Holliday junction (HJ) DNA during genetic recombination and DNA repair. Endonuclease that resolves HJ intermediates. Cleaves cruciform DNA by making single-stranded nicks across the HJ at symmetrical positions within the homologous arms, yielding a 5'-phosphate and a 3'-hydroxyl group; requires a central core of homology in the junction. The consensus cleavage sequence is 5'-(A/T)TT(C/G)-3'. Cleavage occurs on the 3'-side of the TT dinucleotide at the point of strand exchange. HJ branch migration catalyzed by RuvA-RuvB allows RuvC to scan DNA until it finds its consensus sequence, where it cleaves and resolves the cruciform DNA. In Pseudomonas putida (strain ATCC 700007 / DSM 6899 / JCM 31910 / BCRC 17059 / LMG 24140 / F1), this protein is Crossover junction endodeoxyribonuclease RuvC.